The sequence spans 109 residues: Fluoride-specific ion channel FluC 1 (109 aa).

The next 4 membrane-spanning stretches (helical) occupy residues 1–21 (MVIV…YFFS), 29–49 (LPLG…VFYN), 55–75 (EVYA…STLN), and 87–107 (VFYS…FLGI). Positions 66 and 69 each coordinate Na(+).

The protein belongs to the fluoride channel Fluc/FEX (TC 1.A.43) family.

The protein resides in the cell membrane. The enzyme catalyses fluoride(in) = fluoride(out). With respect to regulation, na(+) is not transported, but it plays an essential structural role and its presence is essential for fluoride channel function. Its function is as follows. Fluoride-specific ion channel. Important for reducing fluoride concentration in the cell, thus reducing its toxicity. The sequence is that of Fluoride-specific ion channel FluC 1 from Streptococcus pneumoniae (strain ATCC BAA-255 / R6).